Here is a 178-residue protein sequence, read N- to C-terminus: Large ribosomal subunit protein eL20 (178 aa).

The protein belongs to the eukaryotic ribosomal protein eL20 family.

This is Large ribosomal subunit protein eL20 (RPL18A) from Oryza sativa subsp. japonica (Rice).